Reading from the N-terminus, the 659-residue chain is Putative pentatricopeptide repeat-containing protein At3g16890, mitochondrial (659 aa).

A mitochondrion-targeting transit peptide spans 1 to 32 (MRGFASSASRIATAAAASKSLNASTSVNPKLS). PPR repeat units follow at residues 109 to 143 (DQSL…GYRI), 144 to 178 (SDEL…GMKP), 179 to 213 (STRL…GCKP), 214 to 248 (DRFT…GNRP), 249 to 283 (NVFT…KLNP), 284 to 318 (NEAT…DSNL), 319 to 353 (QRVG…GYIP), 354 to 388 (DSST…GVKP), 389 to 423 (GFNG…GLLS), 424 to 458 (SVYS…GISP), 459 to 493 (NLVT…GFKP), 494 to 528 (DVIT…GIEP), 529 to 563 (NEIT…GLSP), 564 to 598 (DLYA…GLKP), and 599 to 633 (DNFT…GCVP).

This sequence belongs to the PPR family. P subfamily.

The protein localises to the mitochondrion. Functionally, required for the ubiquinol-cytochrome c oxidoreductase activity of mitochondrial complex III. This chain is Putative pentatricopeptide repeat-containing protein At3g16890, mitochondrial (PPR40), found in Arabidopsis thaliana (Mouse-ear cress).